The primary structure comprises 1184 residues: DNA-directed RNA polymerase subunit beta (1184 aa).

The tract at residues 1160 to 1184 (DDDFTNQNDAFNIVQPENAAAEKTE) is disordered.

It belongs to the RNA polymerase beta chain family. The RNAP catalytic core consists of 2 alpha, 1 beta, 1 beta' and 1 omega subunit. When a sigma factor is associated with the core the holoenzyme is formed, which can initiate transcription.

It catalyses the reaction RNA(n) + a ribonucleoside 5'-triphosphate = RNA(n+1) + diphosphate. DNA-dependent RNA polymerase catalyzes the transcription of DNA into RNA using the four ribonucleoside triphosphates as substrates. The sequence is that of DNA-directed RNA polymerase subunit beta from Listeria welshimeri serovar 6b (strain ATCC 35897 / DSM 20650 / CCUG 15529 / CIP 8149 / NCTC 11857 / SLCC 5334 / V8).